The sequence spans 571 residues: Proline--tRNA ligase (571 aa).

The protein belongs to the class-II aminoacyl-tRNA synthetase family. ProS type 1 subfamily. As to quaternary structure, homodimer.

The protein localises to the cytoplasm. It carries out the reaction tRNA(Pro) + L-proline + ATP = L-prolyl-tRNA(Pro) + AMP + diphosphate. Its function is as follows. Catalyzes the attachment of proline to tRNA(Pro) in a two-step reaction: proline is first activated by ATP to form Pro-AMP and then transferred to the acceptor end of tRNA(Pro). As ProRS can inadvertently accommodate and process non-cognate amino acids such as alanine and cysteine, to avoid such errors it has two additional distinct editing activities against alanine. One activity is designated as 'pretransfer' editing and involves the tRNA(Pro)-independent hydrolysis of activated Ala-AMP. The other activity is designated 'posttransfer' editing and involves deacylation of mischarged Ala-tRNA(Pro). The misacylated Cys-tRNA(Pro) is not edited by ProRS. In Glaesserella parasuis serovar 5 (strain SH0165) (Haemophilus parasuis), this protein is Proline--tRNA ligase.